The sequence spans 652 residues: DNA ligase (652 aa).

Residues 29–33 (DSEYD), 78–79 (SL), and Glu-107 each bind NAD(+). Catalysis depends on Lys-109, which acts as the N6-AMP-lysine intermediate. Residues Arg-130, Glu-164, Lys-278, and Lys-302 each coordinate NAD(+). Cys-395, Cys-398, Cys-413, and Cys-418 together coordinate Zn(2+). The 76-residue stretch at 577 to 652 (DRQAELFGLT…IEDEDWLLNL (76 aa)) folds into the BRCT domain.

This sequence belongs to the NAD-dependent DNA ligase family. LigA subfamily. It depends on Mg(2+) as a cofactor. Requires Mn(2+) as cofactor.

The enzyme catalyses NAD(+) + (deoxyribonucleotide)n-3'-hydroxyl + 5'-phospho-(deoxyribonucleotide)m = (deoxyribonucleotide)n+m + AMP + beta-nicotinamide D-nucleotide.. Its function is as follows. DNA ligase that catalyzes the formation of phosphodiester linkages between 5'-phosphoryl and 3'-hydroxyl groups in double-stranded DNA using NAD as a coenzyme and as the energy source for the reaction. It is essential for DNA replication and repair of damaged DNA. In Streptococcus equi subsp. zooepidemicus (strain MGCS10565), this protein is DNA ligase.